A 243-amino-acid polypeptide reads, in one-letter code: MSEMIYGIHAVQALLERAPERFQEVFILKGREDKRLLPLIHALESQGVVIQLANRQYLDEKSDGAVHQGIIARVKPGRQYQENDLPDLIALHDRPFLLILDGVTDPHNLGACLRSADAAGVHAVIVPKDRSAQLNATAKKVACGAAESVPLIRVTNLARTMRMLQEENIWIVGTAGEADHTLYQSKMPGRMALVMGAEGEGMRRLTREHCDELISIPMAGSVSSLNVSVATGICLFEAVRQRT.

The S-adenosyl-L-methionine site is built by Gly196, Ile216, and Leu225.

Belongs to the class IV-like SAM-binding methyltransferase superfamily. RNA methyltransferase TrmH family. RlmB subfamily. Homodimer.

It localises to the cytoplasm. The catalysed reaction is guanosine(2251) in 23S rRNA + S-adenosyl-L-methionine = 2'-O-methylguanosine(2251) in 23S rRNA + S-adenosyl-L-homocysteine + H(+). Specifically methylates the ribose of guanosine 2251 in 23S rRNA. In Salmonella typhimurium (strain LT2 / SGSC1412 / ATCC 700720), this protein is 23S rRNA (guanosine-2'-O-)-methyltransferase RlmB.